The sequence spans 291 residues: tRNA U34 carboxymethyltransferase (291 aa).

Carboxy-S-adenosyl-L-methionine is bound by residues Lys-61, Trp-75, Lys-80, Gly-100, Asp-122 to Ser-124, Val-149 to Glu-150, Tyr-169, and Arg-284.

Belongs to the class I-like SAM-binding methyltransferase superfamily. CmoB family. As to quaternary structure, homotetramer.

It catalyses the reaction carboxy-S-adenosyl-L-methionine + 5-hydroxyuridine(34) in tRNA = 5-carboxymethoxyuridine(34) in tRNA + S-adenosyl-L-homocysteine + H(+). Its function is as follows. Catalyzes carboxymethyl transfer from carboxy-S-adenosyl-L-methionine (Cx-SAM) to 5-hydroxyuridine (ho5U) to form 5-carboxymethoxyuridine (cmo5U) at position 34 in tRNAs. This Campylobacter jejuni (strain RM1221) protein is tRNA U34 carboxymethyltransferase.